Consider the following 933-residue polypeptide: 2-oxoglutarate dehydrogenase E1 component (933 aa).

The protein belongs to the alpha-ketoglutarate dehydrogenase family. In terms of assembly, homodimer. Part of the 2-oxoglutarate dehydrogenase (OGDH) complex composed of E1 (2-oxoglutarate dehydrogenase), E2 (dihydrolipoamide succinyltransferase) and E3 (dihydrolipoamide dehydrogenase); the complex contains multiple copies of the three enzymatic components (E1, E2 and E3). Interacts (via N-terminus) with SucB, the E2 component of OGDH complex. Thiamine diphosphate is required as a cofactor.

The enzyme catalyses N(6)-[(R)-lipoyl]-L-lysyl-[protein] + 2-oxoglutarate + H(+) = N(6)-[(R)-S(8)-succinyldihydrolipoyl]-L-lysyl-[protein] + CO2. Functionally, E1 component of the 2-oxoglutarate dehydrogenase (OGDH) complex which catalyzes the decarboxylation of 2-oxoglutarate, the first step in the conversion of 2-oxoglutarate to succinyl-CoA and CO(2). This chain is 2-oxoglutarate dehydrogenase E1 component (sucA), found in Escherichia coli O157:H7.